Consider the following 203-residue polypeptide: Protein GrpE (203 aa).

The protein belongs to the GrpE family. In terms of assembly, homodimer.

It is found in the cytoplasm. Participates actively in the response to hyperosmotic and heat shock by preventing the aggregation of stress-denatured proteins, in association with DnaK and GrpE. It is the nucleotide exchange factor for DnaK and may function as a thermosensor. Unfolded proteins bind initially to DnaJ; upon interaction with the DnaJ-bound protein, DnaK hydrolyzes its bound ATP, resulting in the formation of a stable complex. GrpE releases ADP from DnaK; ATP binding to DnaK triggers the release of the substrate protein, thus completing the reaction cycle. Several rounds of ATP-dependent interactions between DnaJ, DnaK and GrpE are required for fully efficient folding. This chain is Protein GrpE, found in Pseudoalteromonas translucida (strain TAC 125).